The primary structure comprises 314 residues: Olfactory receptor 5G29 (314 aa).

The Extracellular segment spans residues 1–25; sequence MEEKNQTIVMEFFFLGLTDHLYQKI. N-linked (GlcNAc...) asparagine glycosylation is present at asparagine 5. Residues 26–46 form a helical membrane-spanning segment; it reads ALFITILFVYLVTLGGNLGMI. The Cytoplasmic portion of the chain corresponds to 47 to 54; sequence TLIWADPR. The chain crosses the membrane as a helical span at residues 55-75; it reads LHTPMYFFLSHLSFVDMCSSS. At 76 to 99 the chain is on the extracellular side; the sequence is SIAPKMLCDIFAEEKRISFMGCAA. Cysteine 97 and cysteine 189 are disulfide-bonded. A helical transmembrane segment spans residues 100–120; the sequence is QMWFFGFFVGTECFLLASMAY. Residues 121–133 are Cytoplasmic-facing; sequence DRYTAICKPLLYT. Residues 134–154 form a helical membrane-spanning segment; the sequence is LLMSQRVCVHLVVGPYVFAII. Residues 155–196 are Extracellular-facing; sequence NITTHTTLAFCLPFCGSNTINHFFCDVSPLLSLACADSWVNK. The chain crosses the membrane as a helical span at residues 197 to 217; the sequence is VVLFVLSGAIGVFSGLIIIVS. At 218–237 the chain is on the cytoplasmic side; it reads YVSILMTIFKIQTADGKQKA. The chain crosses the membrane as a helical span at residues 238 to 258; sequence FSTCSSHLSAVSILYGTLFFI. At 259-271 the chain is on the extracellular side; the sequence is YVRPSASFSLNIN. Residues 272-292 traverse the membrane as a helical segment; that stretch reads KMISLFYTVVIPMLNPLIYSL. Topologically, residues 293-312 are cytoplasmic; that stretch reads RNKEVKGAFRRKVQKKHFPA.

This sequence belongs to the G-protein coupled receptor 1 family.

The protein resides in the cell membrane. Potential odorant receptor. The protein is Olfactory receptor 5G29 of Mus musculus (Mouse).